The sequence spans 223 residues: Receptor-transporting protein 2 (223 aa).

The Cytoplasmic portion of the chain corresponds to 1 to 193; it reads MSTSLTTCEW…KKGQAGFISS (193 aa). Residues 52–161 form a 3CxxC-type zinc finger; it reads ASGRFHCSWC…SEFCEACQEG (110 aa). Residues 194–216 traverse the membrane as a helical segment; it reads FFSFRWCLFWGTLCLVIVYLQFF. At 217 to 223 the chain is on the extracellular side; the sequence is RGRSGFL.

It belongs to the TMEM7 family. Interacts with olfactory receptors. Predominantly expressed in olfactory and vomeronasal organs, in mature olfactory sensory neurons.

Its subcellular location is the cell membrane. Its function is as follows. Specifically promotes functional cell surface expression of olfactory receptors, but not of other GPCRs. The protein is Receptor-transporting protein 2 (Rtp2) of Mus musculus (Mouse).